Reading from the N-terminus, the 243-residue chain is Probable transcriptional regulatory protein LJ_0904 (243 aa).

The tract at residues 1-22 (MSGHSKWHNIQGRKNAQDAKRG) is disordered.

The protein belongs to the TACO1 family.

The protein localises to the cytoplasm. This chain is Probable transcriptional regulatory protein LJ_0904, found in Lactobacillus johnsonii (strain CNCM I-12250 / La1 / NCC 533).